A 248-amino-acid polypeptide reads, in one-letter code: Large ribosomal subunit protein uL4 (248 aa).

The segment at 44–109 (QDTGTDEYAG…LDINTKERKL (66 aa)) is disordered. Positions 92-109 (PKAEKDRGLDINTKERKL) are enriched in basic and acidic residues.

This sequence belongs to the universal ribosomal protein uL4 family. Part of the 50S ribosomal subunit.

Its function is as follows. One of the primary rRNA binding proteins, this protein initially binds near the 5'-end of the 23S rRNA. It is important during the early stages of 50S assembly. It makes multiple contacts with different domains of the 23S rRNA in the assembled 50S subunit and ribosome. Functionally, forms part of the polypeptide exit tunnel. The chain is Large ribosomal subunit protein uL4 from Natronomonas pharaonis (strain ATCC 35678 / DSM 2160 / CIP 103997 / JCM 8858 / NBRC 14720 / NCIMB 2260 / Gabara) (Halobacterium pharaonis).